The following is a 185-amino-acid chain: Elongation factor P (185 aa).

The protein belongs to the elongation factor P family.

It is found in the cytoplasm. The protein operates within protein biosynthesis; polypeptide chain elongation. In terms of biological role, involved in peptide bond synthesis. Stimulates efficient translation and peptide-bond synthesis on native or reconstituted 70S ribosomes in vitro. Probably functions indirectly by altering the affinity of the ribosome for aminoacyl-tRNA, thus increasing their reactivity as acceptors for peptidyl transferase. The sequence is that of Elongation factor P from Oleidesulfovibrio alaskensis (strain ATCC BAA-1058 / DSM 17464 / G20) (Desulfovibrio alaskensis).